We begin with the raw amino-acid sequence, 407 residues long: Zinc finger protein 260 (407 aa).

Residues 1 to 21 form a disordered region; the sequence is MLESLQPESELLHDEPDPGEK. Over residues 10-21 the composition is skewed to basic and acidic residues; that stretch reads ELLHDEPDPGEK. The C2H2-type 1 zinc finger occupies 23 to 45; sequence YECDECRKTFSLEQHFVEHKKTH. The C2H2-type 2; degenerate zinc finger occupies 51-73; sequence PECTGCGEEFSKASSLTRHLRSR. 11 consecutive C2H2-type zinc fingers follow at residues 79–101, 131–153, 159–181, 187–209, 215–237, 243–265, 271–293, 299–321, 327–349, 355–377, and 383–405; these read YKCG…QKQH, YACK…EKIH, FECN…QNVH, FKCN…QRIH, YECK…QRSH, YTCK…EKIH, YKCN…HNIH, YECN…VRIH, YECK…MRSH, YGCN…MRIH, and YQCS…QRIH.

The protein belongs to the krueppel C2H2-type zinc-finger protein family. Binds DNA. Interacts with GATA4. As to expression, expressed in both embryonic, fetal and adult heart. Also expressed in lung, skeletal muscle and adrenal glands.

The protein localises to the nucleus. Functionally, transcription factor that acts as a cardiac regulator and an effector of alpha1-adrenergic signaling. Binds to PE response elements (PERE) present in the promoter of genes such as ANF/NPPA and acts as a direct transcriptional activator of NPPA. Also acts as a cofactor with GATA4, a key cardiac regulator. The chain is Zinc finger protein 260 (Znf260) from Rattus norvegicus (Rat).